The sequence spans 201 residues: MTLVSQIEAILFVVGEEGIGLEELAYLLEKSTAKTYEELTKLKEHYASDNKSALNILEVGNHFVLTTKKKYASLLKKYAQSPMSNALSQAALETLSIIAYKQPISRIEIDEIRGVQTSGSIQKLVARQLIEEKGRVDGPGRAILYGTTKYFMDYFGLKSLDELPDIQQMEDELEEELPMDLFFDRYQETNPMSETTEGEEA.

Belongs to the ScpB family. In terms of assembly, homodimer. Homodimerization may be required to stabilize the binding of ScpA to the Smc head domains. Component of a cohesin-like complex composed of ScpA, ScpB and the Smc homodimer, in which ScpA and ScpB bind to the head domain of Smc. The presence of the three proteins is required for the association of the complex with DNA.

Its subcellular location is the cytoplasm. In terms of biological role, participates in chromosomal partition during cell division. May act via the formation of a condensin-like complex containing Smc and ScpA that pull DNA away from mid-cell into both cell halves. The protein is Segregation and condensation protein B of Enterococcus faecalis (strain ATCC 700802 / V583).